We begin with the raw amino-acid sequence, 216 residues long: Dimethylamine corrinoid protein 2 (216 aa).

Residues 1-91 (MASKEELLQE…EMPAGTETKK (91 aa)) form the B12-binding N-terminal domain. The region spanning 92–216 (LGVIVNGTVE…AKAKELLLGK (125 aa)) is the B12-binding domain. Position 105 (H105) interacts with methylcob(III)alamin.

Belongs to the methylamine corrinoid protein family.

It functions in the pathway one-carbon metabolism; methanogenesis from dimethylamine. In terms of biological role, acts as a methyl group carrier between MtbB and MtbA. The sequence is that of Dimethylamine corrinoid protein 2 (mtbC2) from Methanosarcina acetivorans (strain ATCC 35395 / DSM 2834 / JCM 12185 / C2A).